A 52-amino-acid chain; its full sequence is Eukaryotic translation initiation factor 2 subunit 1 (52 aa).

Residues 16–52 enclose the S1 motif domain; the sequence is EDVVMVNVRSIAEMGAYVSLLEYNNIEGRILLSELSR. The residue at position 48 (S48) is a Phosphoserine; by HRI. The residue at position 51 (S51) is a Phosphoserine.

This sequence belongs to the eIF-2-alpha family. As to quaternary structure, eukaryotic translation initiation factor 2 eIF2 is a heterotrimeric complex composed of an alpha (EIF2S1), a beta (EIF2S2) and a gamma (EIF2S3) chain. eIF2 is member of the 43S pre-initiation complex (43S PIC). eIF2 forms a complex with at least CELF1/CUGBP1, CALR, CALR3, EIF2S1, EIF2S2, HSP90B1 and HSPA5. Interaction with METAP2 protects EIF2S1 from inhibitory phosphorylation. Interacts with ABCF1. Associates with ribosomes. Interacts with DDX3X in an RNA-independent manner. Post-translationally, phosphorylation at Ser-48 and Ser-51 stabilizes the eIF-2/GDP/eIF2B complex and prevents GDP/GTP exchange reaction, thus impairing the recycling of eIF-2 between successive rounds of initiation and leading to global inhibition of translation, while concomitantly initiating the preferential translation of integrated stress response (ISR)-specific mRNAs. Substrate for at least 4 kinases: EIF2AK1/HRI, EIF2AK2/PKR, EIF2AK3/PERK and EIF2AK4/GCN2. Phosphorylation on Ser-51 by the EIF2AK4/GCN2 protein kinase occurs in response to amino acid starvation and UV irradiation. Phosphorylation at Ser-51 by the EIF2AK3/PERK protein kinase occurs in response to the unfolded protein response. Phosphorylation at Ser-51 by EIF2AK1/HRI in response to mitochondrial damage promotes relocalization to the mitochondrial surface.

The protein resides in the cytoplasm. Its subcellular location is the stress granule. It localises to the cytosol. The protein localises to the mitochondrion. With respect to regulation, activity is regulated by phosphorylation at Ser-49 and Ser-52, which stabilizes the eIF2/GDP/eIF2B complex and prevents the eIF2B-mediated exchange of GDP for GTP, thereby preventing the formation of the 43S pre-initiation complex (43S PIC). This results in the global attenuation of 5' cap-dependent protein synthesis and concomitant translation of ISR-specific mRNAs that contain a short upstream open reading frame (uORF) in their 5' UTR, such as ATF4, ATF5, DDIT3/CHOP and PPP1R15A/GADD34. In terms of biological role, member of the eIF2 complex that functions in the early steps of protein synthesis by forming a ternary complex with GTP and initiator tRNA. This complex binds to a 40S ribosomal subunit, followed by mRNA binding to form a 43S pre-initiation complex. Junction of the 60S ribosomal subunit to form the 80S initiation complex is preceded by hydrolysis of the GTP bound to eIF2 and release of an eIF2-GDP binary complex. In order for eIF2 to recycle and catalyze another round of initiation, the GDP bound to eIF2 must exchange with GTP by way of a reaction catalyzed by eIF2B. EIF2S1/eIF2-alpha is a key component of the integrated stress response (ISR), required for adaptation to various stress: phosphorylation by metabolic-stress sensing protein kinases (EIF2AK1/HRI, EIF2AK2/PKR, EIF2AK3/PERK and EIF2AK4/GCN2) in response to stress converts EIF2S1/eIF2-alpha in a global protein synthesis inhibitor, leading to a attenuation of cap-dependent translation, while concomitantly initiating the preferential translation of ISR-specific mRNAs, such as the transcriptional activators ATF4 and QRICH1, and hence allowing ATF4- and QRICH1-mediated reprogramming. EIF2S1/eIF2-alpha also acts as an activator of mitophagy in response to mitochondrial damage: phosphorylation by EIF2AK1/HRI promotes relocalization to the mitochondrial surface, thereby triggering PRKN-independent mitophagy. This is Eukaryotic translation initiation factor 2 subunit 1 (EIF2S1) from Oryctolagus cuniculus (Rabbit).